The sequence spans 159 residues: Ribosomal RNA large subunit methyltransferase H (159 aa).

Residues leucine 76, glycine 108, and 127–132 (FSKMTF) each bind S-adenosyl-L-methionine.

The protein belongs to the RNA methyltransferase RlmH family. In terms of assembly, homodimer.

It is found in the cytoplasm. It catalyses the reaction pseudouridine(1915) in 23S rRNA + S-adenosyl-L-methionine = N(3)-methylpseudouridine(1915) in 23S rRNA + S-adenosyl-L-homocysteine + H(+). Specifically methylates the pseudouridine at position 1915 (m3Psi1915) in 23S rRNA. This Bacillus velezensis (strain DSM 23117 / BGSC 10A6 / LMG 26770 / FZB42) (Bacillus amyloliquefaciens subsp. plantarum) protein is Ribosomal RNA large subunit methyltransferase H.